Reading from the N-terminus, the 141-residue chain is MEIEESNLKWLRTEFIATKKPPEPKAPLQPPLPPSKRKGKPPKSPRRRSSRIKPGDLIDYRNISLIGRFISQQGKILSRRVNRVTLKQQRRLTIAIKQARILSSLPFHATDQLFKIKRKIKRRESTARKKRKKGFRKRPKK.

2 disordered regions span residues 14–55 (EFIA…IKPG) and 120–141 (IKRR…RPKK). Residues 24–34 (PKAPLQPPLPP) show a composition bias toward pro residues. Positions 35–51 (SKRKGKPPKSPRRRSSR) are enriched in basic residues.

Belongs to the bacterial ribosomal protein bS18 family. In terms of assembly, part of the 30S ribosomal subunit.

Its subcellular location is the plastid. The protein resides in the chloroplast. The polypeptide is Small ribosomal subunit protein bS18c (Pelargonium hortorum (Common geranium)).